Reading from the N-terminus, the 103-residue chain is Glycoprotein 24B (103 aa).

This sequence belongs to the csb family. O-glycosylated.

Its subcellular location is the cell surface. Functionally, cell-cell adhesion during early development. This Dictyostelium discoideum (Social amoeba) protein is Glycoprotein 24B (csbB).